Here is a 191-residue protein sequence, read N- to C-terminus: Cytochrome c biogenesis ATP-binding export protein CcmA (191 aa).

Residues 6–189 (LVATDIACRR…RVRTLAIRNF (184 aa)) form the ABC transporter domain. 38 to 45 (GANGIGKS) contacts ATP.

The protein belongs to the ABC transporter superfamily. CcmA exporter (TC 3.A.1.107) family. As to quaternary structure, the complex is composed of two ATP-binding proteins (CcmA) and two transmembrane proteins (CcmB).

It is found in the cell inner membrane. It carries out the reaction heme b(in) + ATP + H2O = heme b(out) + ADP + phosphate + H(+). Functionally, part of the ABC transporter complex CcmAB involved in the biogenesis of c-type cytochromes; once thought to export heme, this seems not to be the case, but its exact role is uncertain. Responsible for energy coupling to the transport system. The polypeptide is Cytochrome c biogenesis ATP-binding export protein CcmA (Novosphingobium aromaticivorans (strain ATCC 700278 / DSM 12444 / CCUG 56034 / CIP 105152 / NBRC 16084 / F199)).